The chain runs to 89 residues: Small ribosomal subunit protein uS15 (89 aa).

Belongs to the universal ribosomal protein uS15 family. As to quaternary structure, part of the 30S ribosomal subunit. Forms a bridge to the 50S subunit in the 70S ribosome, contacting the 23S rRNA.

Its function is as follows. One of the primary rRNA binding proteins, it binds directly to 16S rRNA where it helps nucleate assembly of the platform of the 30S subunit by binding and bridging several RNA helices of the 16S rRNA. Forms an intersubunit bridge (bridge B4) with the 23S rRNA of the 50S subunit in the ribosome. This Bdellovibrio bacteriovorus (strain ATCC 15356 / DSM 50701 / NCIMB 9529 / HD100) protein is Small ribosomal subunit protein uS15.